We begin with the raw amino-acid sequence, 221 residues long: MGISRDSMHKRRATGGKQKAWRKKRKYELGRQPANTKLSSNKTVRRVRVRGGNVKWRALRLDTGNYSWGSEAVTRKTRILDVVYNASNNELVRTQTLVKSAIVQVDAAPFKQWYLTHYGVDIGRKKKTPAAKKDNAEGQEVEAAAEETKKSNHVTRKLEKRKEGRTLDPHIEEQFGSGRLLACISSRPGQCGRADGYILEGKELEFYMKKLQRKKGKSAVA.

Disordered regions lie at residues 1 to 41 and 128 to 169; these read MGIS…LSSN and TPAA…TLDP. Over residues 8 to 26 the composition is skewed to basic residues; it reads MHKRRATGGKQKAWRKKRK. Positions 146 to 169 are enriched in basic and acidic residues; sequence EETKKSNHVTRKLEKRKEGRTLDP.

The protein belongs to the eukaryotic ribosomal protein eS8 family.

The sequence is that of Small ribosomal subunit protein eS8 (RPS8) from Zea mays (Maize).